Reading from the N-terminus, the 436-residue chain is Eukaryotic peptide chain release factor subunit 1 (436 aa).

This sequence belongs to the eukaryotic release factor 1 family. Heterodimer of two subunits, one of which binds GTP.

The protein resides in the cytoplasm. Directs the termination of nascent peptide synthesis (translation) in response to the termination codon UGA. In L.striatus UAA and UAG codes for glutamine. This is Eukaryotic peptide chain release factor subunit 1 (eRF1) from Loxodes striatus.